Reading from the N-terminus, the 417-residue chain is Probable lysophospholipase BODYGUARD 4 (417 aa).

An N-terminal signal peptide occupies residues 1-49; the sequence is MSFPRKFGTAIHAALSFIVFFFLDLLDAILCVVYEFVDEILEENSTGCY. Residue C50 is the site of N-palmitoyl cysteine attachment. An AB hydrolase-1 domain is found at 150–259; the sequence is VIFIHGFMGS…PPYFPSSVEG (110 aa). H154 is a catalytic residue. S225 functions as the Nucleophile in the catalytic mechanism. Residues D367 and H395 each act as charge relay system in the active site.

As to expression, expressed in epidermal cells.

Its subcellular location is the cell membrane. It localises to the secreted. It is found in the cell wall. In terms of biological role, involved in cuticle development and morphogenesis. The protein is Probable lysophospholipase BODYGUARD 4 of Arabidopsis thaliana (Mouse-ear cress).